The sequence spans 92 residues: Acyl-CoA-binding domain-containing protein 6 (92 aa).

The region spanning 3-88 (LKEEFEEHAE…VKQLLEVAAS (86 aa)) is the ACB domain. An acyl-CoA contacts are provided by residues 30-34 (YGLYK), Lys-52, Lys-56, and Tyr-75.

It belongs to the ACBP family. As to quaternary structure, interacts with PDLP8. As to expression, mostly expressed in seeds, stems, and siliques, and, to a lower extent, in leaves, flowers, and roots (at protein level). Highly expressed in root and shoot phloem companion cells.

It localises to the cytoplasm. The protein localises to the cell membrane. Its function is as follows. Binds medium- and long-chain acyl-CoA esters with very high affinity. May function as an intracellular carrier of acyl-CoA esters. Confers resistance to cold and freezing. Interacts with phosphatidylcholine and derivatives, but not phosphatidic acid and lysophosphatidylcholine. May be involved in phospholipid metabolism. In Arabidopsis thaliana (Mouse-ear cress), this protein is Acyl-CoA-binding domain-containing protein 6 (ACBP6).